The following is an 86-amino-acid chain: Small ribosomal subunit protein uS15 (86 aa).

Positions Met1–Glu10 are enriched in polar residues. A disordered region spans residues Met1–Ser21.

It belongs to the universal ribosomal protein uS15 family. As to quaternary structure, part of the 30S ribosomal subunit. Forms a bridge to the 50S subunit in the 70S ribosome, contacting the 23S rRNA.

Functionally, one of the primary rRNA binding proteins, it binds directly to 16S rRNA where it helps nucleate assembly of the platform of the 30S subunit by binding and bridging several RNA helices of the 16S rRNA. Its function is as follows. Forms an intersubunit bridge (bridge B4) with the 23S rRNA of the 50S subunit in the ribosome. The sequence is that of Small ribosomal subunit protein uS15 from Xylella fastidiosa (strain 9a5c).